The following is a 289-amino-acid chain: Serine/threonine-protein phosphatase Pgam5, mitochondrial (289 aa).

A helical transmembrane segment spans residues 7–23 (LVCGAGAGLAAFYLSRL).

The protein belongs to the phosphoglycerate mutase family. BPG-dependent PGAM subfamily. As to quaternary structure, interacts with Pk92B/ASK1.

The protein localises to the mitochondrion outer membrane. It catalyses the reaction O-phospho-L-seryl-[protein] + H2O = L-seryl-[protein] + phosphate. The enzyme catalyses O-phospho-L-threonyl-[protein] + H2O = L-threonyl-[protein] + phosphate. In terms of biological role, displays phosphatase activity for serine/threonine residues, and dephosphorylates and activates Pk92B kinase. Has apparently no phosphoglycerate mutase activity. The polypeptide is Serine/threonine-protein phosphatase Pgam5, mitochondrial (Drosophila ananassae (Fruit fly)).